The chain runs to 309 residues: MSIRILPDSEIKAAASSFHAPALLFANPKNLYQRRIARFTSLSNAHPLEDYLHFASQVAEAQLAVLQQQPIAQDPRLSAEKLSAEDLAKQPLNAQRWQRDPVWQTLLMAILAEMKPKANETILNTIETLEKYSKAERDSIADKLLAQEFEQISSAQAVFIWAALSLYWLQLVQQIPHSSHKESGESLHVCPICASAPVTSVIHFGAEQGLRYLHCALCETEWNMVRSKCTNCDQTGKLDYWSLDSEIAAVKAESCGDCHSYLKALYQERDPKVEAVADDLASIFLDVEMEEKGLQRSGLNPFLFPNPEA.

This sequence belongs to the FdhE family.

It is found in the cytoplasm. In terms of biological role, necessary for formate dehydrogenase activity. The polypeptide is Protein FdhE homolog (Pasteurella multocida (strain Pm70)).